Reading from the N-terminus, the 639-residue chain is Threonine--tRNA ligase (639 aa).

The 61-residue stretch at 1–61 folds into the TGS domain; it reads MIHITLPDGS…TQDSPLSIVT (61 aa). Residues 242–533 are catalytic; the sequence is DHRKLGRELD…LIEEHAGALP (292 aa). Zn(2+) is bound by residues Cys333, His384, and His510.

It belongs to the class-II aminoacyl-tRNA synthetase family. In terms of assembly, homodimer. Zn(2+) is required as a cofactor.

The protein resides in the cytoplasm. The catalysed reaction is tRNA(Thr) + L-threonine + ATP = L-threonyl-tRNA(Thr) + AMP + diphosphate + H(+). In terms of biological role, catalyzes the attachment of threonine to tRNA(Thr) in a two-step reaction: L-threonine is first activated by ATP to form Thr-AMP and then transferred to the acceptor end of tRNA(Thr). Also edits incorrectly charged L-seryl-tRNA(Thr). This Acidovorax sp. (strain JS42) protein is Threonine--tRNA ligase.